A 336-amino-acid chain; its full sequence is MFLTLIAAIISFMVSAFTMPYFIKFYQLKKIGGQQMHEDVKQHLAKAGTPTMGGTVFLLVATAVSLLVSLFSIKNTQSLALISGILSIVVIYGIIGFLDDFLKIFKQINEGLTAKQKLALQLAGGLMFYFLHVSPSGISSINVFGYQLSLGIFYLFFVLFWVVGFSNAVNLTDGIDGLASISVVISLVTYGVIAYVQGQFDVLLLIGTMIGALLGFFLFNHKPAKVFMGDVGSLALGAMLAAISIALRQEWTLLIIGIVYVLETSSVMLQVSYFKYTKKKYGEGRRIFRMTPFHHHLELGGLSGKGKKWSEWQVDAFLWGVGSLASLLVLAILYVF.

Transmembrane regions (helical) follow at residues 3-23, 53-73, 78-98, 118-138, 143-163, 174-194, 200-220, 226-246, 251-271, and 316-336; these read LTLIAAIISFMVSAFTMPYFI, GGTVFLLVATAVSLLVSLFSI, SLALISGILSIVVIYGIIGFL, LALQLAGGLMFYFLHVSPSGI, VFGYQLSLGIFYLFFVLFWVV, GIDGLASISVVISLVTYGVIA, FDVLLLIGTMIGALLGFFLFN, VFMGDVGSLALGAMLAAISIA, WTLLIIGIVYVLETSSVMLQV, and AFLWGVGSLASLLVLAILYVF.

It belongs to the glycosyltransferase 4 family. MraY subfamily. The cofactor is Mg(2+).

It localises to the cell membrane. It catalyses the reaction UDP-N-acetyl-alpha-D-muramoyl-L-alanyl-gamma-D-glutamyl-L-lysyl-D-alanyl-D-alanine + di-trans,octa-cis-undecaprenyl phosphate = Mur2Ac(oyl-L-Ala-gamma-D-Glu-L-Lys-D-Ala-D-Ala)-di-trans,octa-cis-undecaprenyl diphosphate + UMP. It participates in cell wall biogenesis; peptidoglycan biosynthesis. Catalyzes the initial step of the lipid cycle reactions in the biosynthesis of the cell wall peptidoglycan: transfers peptidoglycan precursor phospho-MurNAc-pentapeptide from UDP-MurNAc-pentapeptide onto the lipid carrier undecaprenyl phosphate, yielding undecaprenyl-pyrophosphoryl-MurNAc-pentapeptide, known as lipid I. The polypeptide is Phospho-N-acetylmuramoyl-pentapeptide-transferase (Streptococcus pyogenes serotype M6 (strain ATCC BAA-946 / MGAS10394)).